The sequence spans 40 residues: Alpha-conotoxin-like Lp1.6b (40 aa).

Residues 1–23 (VVLGPASDGRNAAANNKASDLIR) constitute a propeptide that is removed on maturation. Pyrrolidone carboxylic acid is present on Gln24. Intrachain disulfides connect Cys26/Cys32 and Cys27/Cys39.

The protein belongs to the conotoxin A superfamily. As to expression, expressed by the venom duct.

The protein resides in the secreted. Alpha-conotoxins act on postsynaptic membranes, they bind to the nicotinic acetylcholine receptors (nAChR) and thus inhibit them. This chain is Alpha-conotoxin-like Lp1.6b, found in Conus leopardus (Leopard cone).